A 949-amino-acid chain; its full sequence is Protein translocase subunit SecA 1 (949 aa).

Residues Gln86, 104 to 108, and Asp493 each bind ATP; that span reads GEGKT. The tract at residues 869 to 949 is disordered; sequence VDGGARERAP…AKPPKSVKKR (81 aa). The span at 925–934 shows a compositional bias: basic and acidic residues; the sequence is SRRERREAAR.

This sequence belongs to the SecA family. In terms of assembly, monomer and homodimer. Part of the essential Sec protein translocation apparatus which comprises SecA, SecYEG and auxiliary proteins SecDF. Other proteins may also be involved.

The protein resides in the cell membrane. It localises to the cytoplasm. It catalyses the reaction ATP + H2O + cellular proteinSide 1 = ADP + phosphate + cellular proteinSide 2.. Its function is as follows. Part of the Sec protein translocase complex. Interacts with the SecYEG preprotein conducting channel. Has a central role in coupling the hydrolysis of ATP to the transfer of proteins into and across the cell membrane, serving as an ATP-driven molecular motor driving the stepwise translocation of polypeptide chains across the membrane. This chain is Protein translocase subunit SecA 1, found in Mycobacterium bovis (strain ATCC BAA-935 / AF2122/97).